The chain runs to 315 residues: Methionyl-tRNA formyltransferase (315 aa).

113–116 (SLLP) lines the (6S)-5,6,7,8-tetrahydrofolate pocket.

Belongs to the Fmt family.

The catalysed reaction is L-methionyl-tRNA(fMet) + (6R)-10-formyltetrahydrofolate = N-formyl-L-methionyl-tRNA(fMet) + (6S)-5,6,7,8-tetrahydrofolate + H(+). Attaches a formyl group to the free amino group of methionyl-tRNA(fMet). The formyl group appears to play a dual role in the initiator identity of N-formylmethionyl-tRNA by promoting its recognition by IF2 and preventing the misappropriation of this tRNA by the elongation apparatus. The chain is Methionyl-tRNA formyltransferase from Edwardsiella ictaluri (strain 93-146).